Consider the following 330-residue polypeptide: Beta-ketoacyl-[acyl-carrier-protein] synthase III (330 aa).

Residues cysteine 114 and histidine 254 contribute to the active site. The ACP-binding stretch occupies residues 255 to 259 (QANLR). The active site involves asparagine 284.

This sequence belongs to the thiolase-like superfamily. FabH family. In terms of assembly, homodimer.

It localises to the cytoplasm. The enzyme catalyses malonyl-[ACP] + acetyl-CoA + H(+) = 3-oxobutanoyl-[ACP] + CO2 + CoA. It functions in the pathway lipid metabolism; fatty acid biosynthesis. In terms of biological role, catalyzes the condensation reaction of fatty acid synthesis by the addition to an acyl acceptor of two carbons from malonyl-ACP. Catalyzes the first condensation reaction which initiates fatty acid synthesis and may therefore play a role in governing the total rate of fatty acid production. Possesses both acetoacetyl-ACP synthase and acetyl transacylase activities. Its substrate specificity determines the biosynthesis of branched-chain and/or straight-chain of fatty acids. This Roseiflexus castenholzii (strain DSM 13941 / HLO8) protein is Beta-ketoacyl-[acyl-carrier-protein] synthase III.